The chain runs to 364 residues: Isopentenyl-diphosphate delta-isomerase (364 aa).

Positions 1–13 are enriched in basic and acidic residues; sequence MSSAQRKDDHVRL. The tract at residues 1–24 is disordered; the sequence is MSSAQRKDDHVRLATEQQRAHSGR. Substrate is bound at residue 6–7; that stretch reads RK. FMN is bound by residues 64–66, serine 94, and asparagine 123; that span reads AMT. 94–96 lines the substrate pocket; the sequence is SMH. Glutamine 153 lines the substrate pocket. Mg(2+) is bound at residue glutamate 154. Residues lysine 185, serine 210, threonine 215, 259 to 261, and 280 to 281 contribute to the FMN site; these read GIR and SG.

Belongs to the IPP isomerase type 2 family. In terms of assembly, homooctamer. Dimer of tetramers. It depends on FMN as a cofactor. The cofactor is NADPH. Requires Mg(2+) as cofactor.

It localises to the cytoplasm. It catalyses the reaction isopentenyl diphosphate = dimethylallyl diphosphate. In terms of biological role, involved in the biosynthesis of isoprenoids. Catalyzes the 1,3-allylic rearrangement of the homoallylic substrate isopentenyl (IPP) to its allylic isomer, dimethylallyl diphosphate (DMAPP). The sequence is that of Isopentenyl-diphosphate delta-isomerase from Kitasatospora griseola (Streptomyces griseolosporeus).